We begin with the raw amino-acid sequence, 395 residues long: Acid ceramidase (395 aa).

The first 21 residues, 1-21 (MLGRSRLTFVLLAAAVTCAEA), serve as a signal peptide directing secretion. C31 and C340 are joined by a disulfide. C143 functions as the Nucleophile in the catalytic mechanism. N-linked (GlcNAc...) asparagine glycosylation is found at N173, N259, N286, and N348. A disulfide bond links C388 and C392.

This sequence belongs to the acid ceramidase family. In terms of assembly, heterodimer; disulfide-linked. The heterodimer is composed of the disulfide-linked alpha and beta chains produced by autocatalytic cleavage of the precursor. N-glycosylated. Post-translationally, proteolytically cleaved into two chains alpha and beta that remain associated via a disulfide bond. Cleavage gives rise to a conformation change that activates the enzyme. The same catalytic Cys residue mediates the autoproteolytic cleavage and subsequent hydrolysis of lipid substrates. The beta chain may undergo an additional C-terminal processing.

Its subcellular location is the lysosome. It localises to the secreted. It catalyses the reaction an N-acylsphing-4-enine + H2O = sphing-4-enine + a fatty acid. The enzyme catalyses N-dodecanoylsphing-4-enine + H2O = dodecanoate + sphing-4-enine. The catalysed reaction is N-tetradecanoylsphing-4-enine + H2O = tetradecanoate + sphing-4-enine. It carries out the reaction N-hexadecanoylsphing-4-enine + H2O = sphing-4-enine + hexadecanoate. It catalyses the reaction N-octadecanoylsphing-4-enine + H2O = sphing-4-enine + octadecanoate. The enzyme catalyses N-dodecanoyl-(4R)-hydroxysphinganine + H2O = (4R)-hydroxysphinganine + dodecanoate. The catalysed reaction is N-(dodecanoyl)-sphinganine + H2O = dodecanoate + sphinganine. It carries out the reaction N-(acetyl)-sphing-4-enine + H2O = sphing-4-enine + acetate. It catalyses the reaction N-(hexanoyl)sphing-4-enine + H2O = hexanoate + sphing-4-enine. The enzyme catalyses N-octanoylsphing-4-enine + H2O = octanoate + sphing-4-enine. The catalysed reaction is N-(9Z-octadecenoyl)-sphing-4-enine + H2O = sphing-4-enine + (9Z)-octadecenoate. It carries out the reaction N-dodecanoylethanolamine + H2O = dodecanoate + ethanolamine. The protein operates within lipid metabolism; sphingolipid metabolism. Lysosomal ceramidase that hydrolyzes sphingolipid ceramides into sphingosine and free fatty acids at acidic pH. Ceramides, sphingosine, and its phosphorylated form sphingosine-1-phosphate are bioactive lipids that mediate cellular signaling pathways regulating several biological processes including cell proliferation, apoptosis and differentiation. Has a higher catalytic efficiency towards C12-ceramides versus other ceramides. Also catalyzes the reverse reaction allowing the synthesis of ceramides from fatty acids and sphingosine. For the reverse synthetic reaction, the natural sphingosine D-erythro isomer is more efficiently utilized as a substrate compared to D-erythro-dihydrosphingosine and D-erythro-phytosphingosine, while the fatty acids with chain lengths of 12 or 14 carbons are the most efficiently used. Also has an N-acylethanolamine hydrolase activity. By regulating the levels of ceramides, sphingosine and sphingosine-1-phosphate in the epidermis, mediates the calcium-induced differentiation of epidermal keratinocytes. Also indirectly regulates tumor necrosis factor/TNF-induced apoptosis. By regulating the intracellular balance between ceramides and sphingosine, in adrenocortical cells, probably also acts as a regulator of steroidogenesis. The chain is Acid ceramidase from Heterocephalus glaber (Naked mole rat).